The chain runs to 139 residues: Small capsomere-interacting protein (139 aa).

A compositionally biased stretch (low complexity) spans 100 to 120 (SLTTPSLSSTPTSLTSMPGLS). Residues 100 to 139 (SLTTPSLSSTPTSLTSMPGLSISGPSTTDTIDSKKKPKAK) are disordered.

This sequence belongs to the herpesviridae small capsomere-interacting protein family. As to quaternary structure, interacts with the major capsid protein/MCP.

The protein resides in the virion. Its subcellular location is the host nucleus. Participates in the assembly of the infectious particles by decorating the outer surface of the capsid shell and thus forming a layer between the capsid and the tegument. Complexes composed of the major capsid protein and small capsomere-interacting protein/SCP assemble together in the host cytoplasm and are translocated to the nucleus, where they accumulate and participate in capsid assembly. This is Small capsomere-interacting protein from Saimiri sciureus (Common squirrel monkey).